The chain runs to 448 residues: ATP-dependent protease ATPase subunit HslU (448 aa).

ATP contacts are provided by residues isoleucine 18, 60–65, aspartate 261, glutamate 326, and arginine 398; that span reads GVGKTE.

Belongs to the ClpX chaperone family. HslU subfamily. As to quaternary structure, a double ring-shaped homohexamer of HslV is capped on each side by a ring-shaped HslU homohexamer. The assembly of the HslU/HslV complex is dependent on binding of ATP.

Its subcellular location is the cytoplasm. In terms of biological role, ATPase subunit of a proteasome-like degradation complex; this subunit has chaperone activity. The binding of ATP and its subsequent hydrolysis by HslU are essential for unfolding of protein substrates subsequently hydrolyzed by HslV. HslU recognizes the N-terminal part of its protein substrates and unfolds these before they are guided to HslV for hydrolysis. This is ATP-dependent protease ATPase subunit HslU from Paraburkholderia xenovorans (strain LB400).